A 526-amino-acid chain; its full sequence is Peptide chain release factor 3 (526 aa).

Positions 8–277 (NKRRTFAIIS…GLTEWAPKPQ (270 aa)) constitute a tr-type G domain. GTP contacts are provided by residues 17–24 (SHPDAGKT), 85–89 (DTPGH), and 139–142 (NKLD).

This sequence belongs to the TRAFAC class translation factor GTPase superfamily. Classic translation factor GTPase family. PrfC subfamily.

It is found in the cytoplasm. Its function is as follows. Increases the formation of ribosomal termination complexes and stimulates activities of RF-1 and RF-2. It binds guanine nucleotides and has strong preference for UGA stop codons. It may interact directly with the ribosome. The stimulation of RF-1 and RF-2 is significantly reduced by GTP and GDP, but not by GMP. In Actinobacillus pleuropneumoniae serotype 3 (strain JL03), this protein is Peptide chain release factor 3.